The following is a 453-amino-acid chain: Bifunctional protein GlmU (453 aa).

The segment at 1–231 (MERTCLAVIL…EIEMTGCNNR (231 aa)) is pyrophosphorylase. UDP-N-acetyl-alpha-D-glucosamine contacts are provided by residues 10-13 (LAAG), Lys-24, Gln-77, 82-83 (GT), 105-107 (YGD), Gly-143, Glu-157, Asn-172, and Asn-229. Position 107 (Asp-107) interacts with Mg(2+). Asn-229 serves as a coordination point for Mg(2+). The interval 232–252 (AELAVIERFWQERRRREMMLA) is linker. The interval 253–453 (GVTMIAPETV…AIKAAKRAKA (201 aa)) is N-acetyltransferase. UDP-N-acetyl-alpha-D-glucosamine is bound by residues Arg-318 and Lys-336. The Proton acceptor role is filled by His-348. UDP-N-acetyl-alpha-D-glucosamine contacts are provided by Tyr-351 and Asn-362. Residues Ala-365, 371–372 (NY), Ser-390, Ser-408, and Arg-425 contribute to the acetyl-CoA site.

This sequence in the N-terminal section; belongs to the N-acetylglucosamine-1-phosphate uridyltransferase family. The protein in the C-terminal section; belongs to the transferase hexapeptide repeat family. Homotrimer. Mg(2+) is required as a cofactor.

Its subcellular location is the cytoplasm. The enzyme catalyses alpha-D-glucosamine 1-phosphate + acetyl-CoA = N-acetyl-alpha-D-glucosamine 1-phosphate + CoA + H(+). It carries out the reaction N-acetyl-alpha-D-glucosamine 1-phosphate + UTP + H(+) = UDP-N-acetyl-alpha-D-glucosamine + diphosphate. The protein operates within nucleotide-sugar biosynthesis; UDP-N-acetyl-alpha-D-glucosamine biosynthesis; N-acetyl-alpha-D-glucosamine 1-phosphate from alpha-D-glucosamine 6-phosphate (route II): step 2/2. Its pathway is nucleotide-sugar biosynthesis; UDP-N-acetyl-alpha-D-glucosamine biosynthesis; UDP-N-acetyl-alpha-D-glucosamine from N-acetyl-alpha-D-glucosamine 1-phosphate: step 1/1. It functions in the pathway bacterial outer membrane biogenesis; LPS lipid A biosynthesis. Functionally, catalyzes the last two sequential reactions in the de novo biosynthetic pathway for UDP-N-acetylglucosamine (UDP-GlcNAc). The C-terminal domain catalyzes the transfer of acetyl group from acetyl coenzyme A to glucosamine-1-phosphate (GlcN-1-P) to produce N-acetylglucosamine-1-phosphate (GlcNAc-1-P), which is converted into UDP-GlcNAc by the transfer of uridine 5-monophosphate (from uridine 5-triphosphate), a reaction catalyzed by the N-terminal domain. This Rhizobium etli (strain CIAT 652) protein is Bifunctional protein GlmU.